Here is an 86-residue protein sequence, read N- to C-terminus: Small ribosomal subunit protein bS20 (86 aa).

Positions 1–25 (MANIKSQMKRIKTNEANRQRNKAVK) are disordered.

This sequence belongs to the bacterial ribosomal protein bS20 family.

Binds directly to 16S ribosomal RNA. This Saccharopolyspora erythraea (strain ATCC 11635 / DSM 40517 / JCM 4748 / NBRC 13426 / NCIMB 8594 / NRRL 2338) protein is Small ribosomal subunit protein bS20.